We begin with the raw amino-acid sequence, 413 residues long: Gamma-glutamyl phosphate reductase (413 aa).

This sequence belongs to the gamma-glutamyl phosphate reductase family.

Its subcellular location is the cytoplasm. It catalyses the reaction L-glutamate 5-semialdehyde + phosphate + NADP(+) = L-glutamyl 5-phosphate + NADPH + H(+). It participates in amino-acid biosynthesis; L-proline biosynthesis; L-glutamate 5-semialdehyde from L-glutamate: step 2/2. In terms of biological role, catalyzes the NADPH-dependent reduction of L-glutamate 5-phosphate into L-glutamate 5-semialdehyde and phosphate. The product spontaneously undergoes cyclization to form 1-pyrroline-5-carboxylate. This is Gamma-glutamyl phosphate reductase from Caulobacter vibrioides (strain ATCC 19089 / CIP 103742 / CB 15) (Caulobacter crescentus).